The following is a 332-amino-acid chain: Ferredoxin--NADP reductase 2 (332 aa).

Glu-37, Gln-45, Tyr-50, Val-90, Phe-124, Asp-285, and Thr-326 together coordinate FAD.

It belongs to the ferredoxin--NADP reductase type 2 family. In terms of assembly, homodimer. FAD is required as a cofactor.

The catalysed reaction is 2 reduced [2Fe-2S]-[ferredoxin] + NADP(+) + H(+) = 2 oxidized [2Fe-2S]-[ferredoxin] + NADPH. The sequence is that of Ferredoxin--NADP reductase 2 from Bacillus pumilus (strain SAFR-032).